A 394-amino-acid polypeptide reads, in one-letter code: S-adenosylmethionine synthase (394 aa).

His15 serves as a coordination point for ATP. Asp17 lines the Mg(2+) pocket. Glu43 contacts K(+). Glu56 and Gln99 together coordinate L-methionine. Positions 99–109 are flexible loop; the sequence is QSPDIALGVNK. Residues 173 to 175, 239 to 240, Asp248, 254 to 255, Ala271, and Lys275 contribute to the ATP site; these read DGK, RF, and RK. Asp248 is an L-methionine binding site. L-methionine is bound at residue Lys279.

The protein belongs to the AdoMet synthase family. In terms of assembly, homotetramer; dimer of dimers. The cofactor is Mg(2+). It depends on K(+) as a cofactor.

The protein localises to the cytoplasm. It carries out the reaction L-methionine + ATP + H2O = S-adenosyl-L-methionine + phosphate + diphosphate. It functions in the pathway amino-acid biosynthesis; S-adenosyl-L-methionine biosynthesis; S-adenosyl-L-methionine from L-methionine: step 1/1. Its function is as follows. Catalyzes the formation of S-adenosylmethionine (AdoMet) from methionine and ATP. The overall synthetic reaction is composed of two sequential steps, AdoMet formation and the subsequent tripolyphosphate hydrolysis which occurs prior to release of AdoMet from the enzyme. The polypeptide is S-adenosylmethionine synthase (Kosmotoga olearia (strain ATCC BAA-1733 / DSM 21960 / TBF 19.5.1)).